The chain runs to 144 residues: Transcriptional regulator SlyA (144 aa).

The region spanning 2–135 is the HTH marR-type domain; the sequence is ESTLGSDLAR…LVGLIGKLEQ (134 aa). Positions 49-72 form a DNA-binding region, H-T-H motif; the sequence is QIQLAKAIGIEQPSLVRTLDQLEE.

It belongs to the SlyA family. In terms of assembly, homodimer.

Transcription regulator that can specifically activate or repress expression of target genes. This is Transcriptional regulator SlyA from Serratia proteamaculans (strain 568).